The sequence spans 105 residues: UPF0473 protein SAK_2028 (105 aa).

Belongs to the UPF0473 family.

In Streptococcus agalactiae serotype Ia (strain ATCC 27591 / A909 / CDC SS700), this protein is UPF0473 protein SAK_2028.